A 357-amino-acid polypeptide reads, in one-letter code: Elongation factor Ts (357 aa).

Residues 82-85 (TDFV) form an involved in Mg(2+) ion dislocation from EF-Tu region.

Belongs to the EF-Ts family.

It localises to the cytoplasm. In terms of biological role, associates with the EF-Tu.GDP complex and induces the exchange of GDP to GTP. It remains bound to the aminoacyl-tRNA.EF-Tu.GTP complex up to the GTP hydrolysis stage on the ribosome. This is Elongation factor Ts from Campylobacter jejuni subsp. doylei (strain ATCC BAA-1458 / RM4099 / 269.97).